A 112-amino-acid polypeptide reads, in one-letter code: Putative pterin-4-alpha-carbinolamine dehydratase (112 aa).

Belongs to the pterin-4-alpha-carbinolamine dehydratase family.

It carries out the reaction (4aS,6R)-4a-hydroxy-L-erythro-5,6,7,8-tetrahydrobiopterin = (6R)-L-erythro-6,7-dihydrobiopterin + H2O. The polypeptide is Putative pterin-4-alpha-carbinolamine dehydratase (Photobacterium profundum (strain SS9)).